The chain runs to 82 residues: Acyl carrier protein (82 aa).

The 76-residue stretch at Gln-3–Val-78 folds into the Carrier domain. Ser-38 is modified (O-(pantetheine 4'-phosphoryl)serine).

This sequence belongs to the acyl carrier protein (ACP) family. In terms of processing, 4'-phosphopantetheine is transferred from CoA to a specific serine of apo-ACP by AcpS. This modification is essential for activity because fatty acids are bound in thioester linkage to the sulfhydryl of the prosthetic group.

It is found in the cytoplasm. The protein operates within lipid metabolism; fatty acid biosynthesis. Functionally, carrier of the growing fatty acid chain in fatty acid biosynthesis. The sequence is that of Acyl carrier protein from Gloeothece citriformis (strain PCC 7424) (Cyanothece sp. (strain PCC 7424)).